The sequence spans 312 residues: DNA-directed RNA polymerase subunit alpha (312 aa).

Residues 1 to 226 (MIEFEKPNIT…EHFKVFESAD (226 aa)) are alpha N-terminal domain (alpha-NTD). The alpha C-terminal domain (alpha-CTD) stretch occupies residues 243 to 312 (KEKKLEMTIE…DLGLSLRQED (70 aa)).

Belongs to the RNA polymerase alpha chain family. In terms of assembly, homodimer. The RNAP catalytic core consists of 2 alpha, 1 beta, 1 beta' and 1 omega subunit. When a sigma factor is associated with the core the holoenzyme is formed, which can initiate transcription.

The enzyme catalyses RNA(n) + a ribonucleoside 5'-triphosphate = RNA(n+1) + diphosphate. Functionally, DNA-dependent RNA polymerase catalyzes the transcription of DNA into RNA using the four ribonucleoside triphosphates as substrates. This Lactobacillus acidophilus (strain ATCC 700396 / NCK56 / N2 / NCFM) protein is DNA-directed RNA polymerase subunit alpha.